The chain runs to 267 residues: 5'-nucleotidase SurE (267 aa).

Residues Asp-14, Asp-15, Ser-45, and Asn-100 each contribute to the a divalent metal cation site.

The protein belongs to the SurE nucleotidase family. A divalent metal cation serves as cofactor.

Its subcellular location is the cytoplasm. The catalysed reaction is a ribonucleoside 5'-phosphate + H2O = a ribonucleoside + phosphate. Functionally, nucleotidase that shows phosphatase activity on nucleoside 5'-monophosphates. The polypeptide is 5'-nucleotidase SurE (Methanosarcina mazei (strain ATCC BAA-159 / DSM 3647 / Goe1 / Go1 / JCM 11833 / OCM 88) (Methanosarcina frisia)).